The primary structure comprises 311 residues: 4-diphosphocytidyl-2-C-methyl-D-erythritol kinase (311 aa).

Residue Lys-16 is part of the active site. ATP is bound at residue 100-110 (PIGAGLAGGSS). Asp-142 is an active-site residue.

This sequence belongs to the GHMP kinase family. IspE subfamily.

It carries out the reaction 4-CDP-2-C-methyl-D-erythritol + ATP = 4-CDP-2-C-methyl-D-erythritol 2-phosphate + ADP + H(+). Its pathway is isoprenoid biosynthesis; isopentenyl diphosphate biosynthesis via DXP pathway; isopentenyl diphosphate from 1-deoxy-D-xylulose 5-phosphate: step 3/6. Functionally, catalyzes the phosphorylation of the position 2 hydroxy group of 4-diphosphocytidyl-2C-methyl-D-erythritol. The protein is 4-diphosphocytidyl-2-C-methyl-D-erythritol kinase of Prochlorococcus marinus (strain MIT 9312).